A 116-amino-acid chain; its full sequence is Nucleoid-associated protein Tfu_0045 (116 aa).

This sequence belongs to the YbaB/EbfC family. As to quaternary structure, homodimer.

The protein resides in the cytoplasm. The protein localises to the nucleoid. Binds to DNA and alters its conformation. May be involved in regulation of gene expression, nucleoid organization and DNA protection. This chain is Nucleoid-associated protein Tfu_0045, found in Thermobifida fusca (strain YX).